An 84-amino-acid chain; its full sequence is Sulfur carrier protein TusA (84 aa).

C19 (cysteine persulfide intermediate) is an active-site residue.

This sequence belongs to the sulfur carrier protein TusA family. In terms of assembly, interacts with IscS.

Its subcellular location is the cytoplasm. Its pathway is tRNA modification. Sulfur carrier protein involved in sulfur trafficking in the cell. Part of a sulfur-relay system required for 2-thiolation during synthesis of 2-thiouridine of the modified wobble base 5-methylaminomethyl-2-thiouridine (mnm(5)s(2)U) in tRNA. Interacts with IscS and stimulates its cysteine desulfurase activity. Accepts an activated sulfur from IscS, which is then transferred to TusD, and thus determines the direction of sulfur flow from IscS to 2-thiouridine formation. Also appears to be involved in sulfur transfer for the biosynthesis of molybdopterin. The polypeptide is Sulfur carrier protein TusA (Yersinia enterocolitica serotype O:8 / biotype 1B (strain NCTC 13174 / 8081)).